A 337-amino-acid chain; its full sequence is Glyceraldehyde-3-phosphate dehydrogenase (337 aa).

Residues 12-13, Asp34, and Lys79 each bind NAD(+); that span reads RI. D-glyceraldehyde 3-phosphate-binding positions include 150 to 152, Thr181, 210 to 211, and Arg233; these read SCT and TG. Catalysis depends on Cys151, which acts as the Nucleophile. Asn315 is a binding site for NAD(+).

It belongs to the glyceraldehyde-3-phosphate dehydrogenase family. In terms of assembly, homotetramer.

It localises to the cytoplasm. It carries out the reaction D-glyceraldehyde 3-phosphate + phosphate + NAD(+) = (2R)-3-phospho-glyceroyl phosphate + NADH + H(+). It participates in carbohydrate degradation; glycolysis; pyruvate from D-glyceraldehyde 3-phosphate: step 1/5. This Phanerodontia chrysosporium (White-rot fungus) protein is Glyceraldehyde-3-phosphate dehydrogenase (GPD).